We begin with the raw amino-acid sequence, 118 residues long: Large ribosomal subunit protein bL20c (118 aa).

Belongs to the bacterial ribosomal protein bL20 family.

It localises to the plastid. It is found in the chloroplast. Binds directly to 23S ribosomal RNA and is necessary for the in vitro assembly process of the 50S ribosomal subunit. It is not involved in the protein synthesizing functions of that subunit. This is Large ribosomal subunit protein bL20c from Gracilaria tenuistipitata var. liui (Red alga).